We begin with the raw amino-acid sequence, 504 residues long: Porphyrin biosynthesis protein HemD (504 aa).

Residues 1–248 (MEHGFVALVG…LSEKFSWFMK (248 aa)) are uroporphyrinogen-III C-methyltransferase. A uroporphyrinogen-III synthase region spans residues 249 to 504 (KPLFGTKILV…LEIGGGNIYD (256 aa)).

It in the N-terminal section; belongs to the precorrin methyltransferase family. The protein in the C-terminal section; belongs to the uroporphyrinogen-III synthase family.

The catalysed reaction is uroporphyrinogen III + 2 S-adenosyl-L-methionine = precorrin-2 + 2 S-adenosyl-L-homocysteine + H(+). It carries out the reaction hydroxymethylbilane = uroporphyrinogen III + H2O. Its pathway is cofactor biosynthesis; adenosylcobalamin biosynthesis; precorrin-2 from uroporphyrinogen III: step 1/1. It functions in the pathway porphyrin-containing compound metabolism; siroheme biosynthesis; precorrin-2 from uroporphyrinogen III: step 1/1. In terms of biological role, may catalyze sequential reactions to synthesize uroporphyrinogen III from hydroxymethylbilane (HMB) and then precorrin-2, which are intermediate compounds in both vitamin B12 and siroheme biosyntheses. In Ruminiclostridium josui (Clostridium josui), this protein is Porphyrin biosynthesis protein HemD (hemD).